Consider the following 451-residue polypeptide: Homeobox protein meis3-B (451 aa).

Residues 33 to 64 form a disordered region; it reads HHSLSQSTPYGSTGAAHRVPMPPGMGSNDGLK. Over residues 34–43 the composition is skewed to polar residues; that stretch reads HSLSQSTPYG. The region spanning 102–185 is the MEIS N-terminal domain; the sequence is GGDVCSSDSF…PIDLVIDDRD (84 aa). The tract at residues 206–272 is disordered; the sequence is NNTWIRDHDE…RDKKRNKKRG (67 aa). The segment covering 218–230 has biased composition (low complexity); it reads STHSGTPGPSSGG. The segment covering 231–242 has biased composition (polar residues); sequence LASQSGDNSSEQ. Residues 267 to 329 constitute a DNA-binding region (homeobox); the sequence is RNKKRGIFPK…NARRRIVQPM (63 aa).

The protein belongs to the TALE/MEIS homeobox family.

It is found in the nucleus. Its function is as follows. A caudalizing protein which is required to pattern the anterior/posterior (A/P) axis during central nervous system (CNS) formation. Inhibits anterior neural expression and acts as a transcriptional activator to induce posterior neural gene expression. Maintains a proper A/P balance required for hindbrain formation by activating the FGF/MAPK pathway, which modulates the planar cell polarity (PCP) pathway. Interacts with retinoid signaling during hindbrain patterning. The protein is Homeobox protein meis3-B (meis3-b) of Xenopus laevis (African clawed frog).